A 235-amino-acid chain; its full sequence is Adenosine 5'-phosphosulfate reductase (235 aa).

Residues Cys-121, Cys-122, Cys-204, and Cys-207 each coordinate [4Fe-4S] cluster. Catalysis depends on Cys-230, which acts as the Nucleophile; cysteine thiosulfonate intermediate.

The protein belongs to the PAPS reductase family. CysH subfamily. [4Fe-4S] cluster serves as cofactor.

The protein resides in the cytoplasm. The enzyme catalyses [thioredoxin]-disulfide + sulfite + AMP + 2 H(+) = adenosine 5'-phosphosulfate + [thioredoxin]-dithiol. Its pathway is sulfur metabolism; hydrogen sulfide biosynthesis; sulfite from sulfate. Catalyzes the formation of sulfite from adenosine 5'-phosphosulfate (APS) using thioredoxin as an electron donor. The polypeptide is Adenosine 5'-phosphosulfate reductase (Geobacillus sp. (strain WCH70)).